The sequence spans 568 residues: Dihydroxy-acid dehydratase (568 aa).

Position 59 (cysteine 59) interacts with [2Fe-2S] cluster. A Mg(2+)-binding site is contributed by aspartate 91. Position 132 (cysteine 132) interacts with [2Fe-2S] cluster. Residues aspartate 133 and lysine 134 each contribute to the Mg(2+) site. N6-carboxylysine is present on lysine 134. Cysteine 204 is a [2Fe-2S] cluster binding site. Glutamate 456 is a Mg(2+) binding site. Catalysis depends on serine 482, which acts as the Proton acceptor.

The protein belongs to the IlvD/Edd family. As to quaternary structure, homodimer. [2Fe-2S] cluster is required as a cofactor. Requires Mg(2+) as cofactor.

It carries out the reaction (2R)-2,3-dihydroxy-3-methylbutanoate = 3-methyl-2-oxobutanoate + H2O. The enzyme catalyses (2R,3R)-2,3-dihydroxy-3-methylpentanoate = (S)-3-methyl-2-oxopentanoate + H2O. It participates in amino-acid biosynthesis; L-isoleucine biosynthesis; L-isoleucine from 2-oxobutanoate: step 3/4. It functions in the pathway amino-acid biosynthesis; L-valine biosynthesis; L-valine from pyruvate: step 3/4. Functionally, functions in the biosynthesis of branched-chain amino acids. Catalyzes the dehydration of (2R,3R)-2,3-dihydroxy-3-methylpentanoate (2,3-dihydroxy-3-methylvalerate) into 2-oxo-3-methylpentanoate (2-oxo-3-methylvalerate) and of (2R)-2,3-dihydroxy-3-methylbutanoate (2,3-dihydroxyisovalerate) into 2-oxo-3-methylbutanoate (2-oxoisovalerate), the penultimate precursor to L-isoleucine and L-valine, respectively. The protein is Dihydroxy-acid dehydratase of Verminephrobacter eiseniae (strain EF01-2).